The chain runs to 393 residues: Translation initiation factor eIF2B subunit beta (393 aa).

Residues 105 to 125 (VSSSNSSSPSQKRDIPSNEKL) form a disordered region. A phosphoserine mark is found at Ser-106, Ser-108, and Ser-112.

Belongs to the eIF-2B alpha/beta/delta subunits family. In terms of assembly, component of the translation initiation factor 2B (eIF2B) complex which is a heterodecamer of two sets of five different subunits: alpha, beta, gamma, delta and epsilon. Subunits alpha, beta and delta comprise a regulatory subcomplex and subunits epsilon and gamma comprise a catalytic subcomplex. Within the complex, the hexameric regulatory complex resides at the center, with the two heterodimeric catalytic subcomplexes bound on opposite sides.

Its subcellular location is the cytoplasm. The protein resides in the cytosol. Its function is as follows. Acts as a component of the translation initiation factor 2B (eIF2B) complex, which catalyzes the exchange of GDP for GTP on the eukaryotic initiation factor 2 (eIF2) complex gamma subunit. Its guanine nucleotide exchange factor activity is repressed when bound to eIF2 complex phosphorylated on the alpha subunit, thereby limiting the amount of methionyl-initiator methionine tRNA available to the ribosome and consequently global translation is repressed. The protein is Translation initiation factor eIF2B subunit beta (tif222) of Schizosaccharomyces pombe (strain 972 / ATCC 24843) (Fission yeast).